Reading from the N-terminus, the 624-residue chain is Mannosyl-oligosaccharide 1,2-alpha-mannosidase MNS3 (624 aa).

Residues 1 to 43 (MSKSLPYSVKDIHYDNAKFRHRSPLKVFSQSLLTLSTKRNYAS) lie on the Cytoplasmic side of the membrane. The chain crosses the membrane as a helical; Signal-anchor for type II membrane protein span at residues 44 to 64 (CSTGKFLILILFFGVACLMLM). At 65–624 (SKSPNESGLN…AHPLPIRRNT (560 aa)) the chain is on the lumenal side. N-linked (GlcNAc...) asparagine glycans are attached at residues Asn-69 and Asn-114. Positions 91 to 123 (LRKPPRLPPRLSPDEGQLRGSSTNGSTISNSDP) are disordered. The segment covering 110 to 121 (GSSTNGSTISNS) has biased composition (low complexity). Catalysis depends on Glu-212, which acts as the Proton donor. Residue Asn-236 is glycosylated (N-linked (GlcNAc...) asparagine). The active site involves Asp-357. N-linked (GlcNAc...) asparagine glycosylation is present at Asn-377. A disulfide bridge links Cys-428 with Cys-471. The active-site Proton donor is the Glu-485. Asn-503 is a glycosylation site (N-linked (GlcNAc...) asparagine). Residue Glu-526 is part of the active site. Residue Thr-613 coordinates Ca(2+).

It belongs to the glycosyl hydrolase 47 family. Requires Ca(2+) as cofactor. Mn(2+) serves as cofactor. Mg(2+) is required as a cofactor. As to expression, expressed in flowers, siliques, stems, leaves, roots, stamens and sepals.

The protein localises to the golgi apparatus. It is found in the cis-Golgi network membrane. The catalysed reaction is N(4)-(alpha-D-Man-(1-&gt;2)-alpha-D-Man-(1-&gt;2)-alpha-D-Man-(1-&gt;3)-[alpha-D-Man-(1-&gt;2)-alpha-D-Man-(1-&gt;3)-[alpha-D-Man-(1-&gt;2)-alpha-D-Man-(1-&gt;6)]-alpha-D-Man-(1-&gt;6)]-beta-D-Man-(1-&gt;4)-beta-D-GlcNAc-(1-&gt;4)-beta-D-GlcNAc)-L-asparaginyl-[protein] (N-glucan mannose isomer 9A1,2,3B1,2,3) + 4 H2O = N(4)-(alpha-D-Man-(1-&gt;3)-[alpha-D-Man-(1-&gt;3)-[alpha-D-Man-(1-&gt;6)]-alpha-D-Man-(1-&gt;6)]-beta-D-Man-(1-&gt;4)-beta-D-GlcNAc-(1-&gt;4)-beta-D-GlcNAc)-L-asparaginyl-[protein] (N-glucan mannose isomer 5A1,2) + 4 beta-D-mannose. The enzyme catalyses N(4)-(alpha-D-Man-(1-&gt;2)-alpha-D-Man-(1-&gt;2)-alpha-D-Man-(1-&gt;3)-[alpha-D-Man-(1-&gt;3)-[alpha-D-Man-(1-&gt;2)-alpha-D-Man-(1-&gt;6)]-alpha-D-Man-(1-&gt;6)]-beta-D-Man-(1-&gt;4)-beta-D-GlcNAc-(1-&gt;4)-beta-D-GlcNAc)-L-asparaginyl-[protein] (N-glucan mannose isomer 8A1,2,3B1,3) + 3 H2O = N(4)-(alpha-D-Man-(1-&gt;3)-[alpha-D-Man-(1-&gt;3)-[alpha-D-Man-(1-&gt;6)]-alpha-D-Man-(1-&gt;6)]-beta-D-Man-(1-&gt;4)-beta-D-GlcNAc-(1-&gt;4)-beta-D-GlcNAc)-L-asparaginyl-[protein] (N-glucan mannose isomer 5A1,2) + 3 beta-D-mannose. It catalyses the reaction N(4)-(alpha-D-Man-(1-&gt;2)-alpha-D-Man-(1-&gt;2)-alpha-D-Man-(1-&gt;3)-[alpha-D-Man-(1-&gt;2)-alpha-D-Man-(1-&gt;3)-[alpha-D-Man-(1-&gt;2)-alpha-D-Man-(1-&gt;6)]-alpha-D-Man-(1-&gt;6)]-beta-D-Man-(1-&gt;4)-beta-D-GlcNAc-(1-&gt;4)-beta-D-GlcNAc)-L-asparaginyl-[protein] (N-glucan mannose isomer 9A1,2,3B1,2,3) + H2O = N(4)-(alpha-D-Man-(1-&gt;2)-alpha-D-Man-(1-&gt;2)-alpha-D-Man-(1-&gt;3)-[alpha-D-Man-(1-&gt;3)-[alpha-D-Man-(1-&gt;2)-alpha-D-Man-(1-&gt;6)]-alpha-D-Man-(1-&gt;6)]-beta-D-Man-(1-&gt;4)-beta-D-GlcNAc-(1-&gt;4)-beta-D-GlcNAc)-L-asparaginyl-[protein] (N-glucan mannose isomer 8A1,2,3B1,3) + beta-D-mannose. It functions in the pathway protein modification; protein glycosylation. Its activity is regulated as follows. Inhibited by kifunensine and 1-deoxymannojirimycin, but not by swainsonine. In terms of biological role, class I alpha-mannosidase essential for early N-glycan processing. Removes preferentially alpha-1,2-linked mannose residues from Man(9)GlcNAc(2) to produce Man(8)GlcNAc(2). Involved in root development and cell wall biosynthesis. In Arabidopsis thaliana (Mouse-ear cress), this protein is Mannosyl-oligosaccharide 1,2-alpha-mannosidase MNS3 (MNS3).